The primary structure comprises 153 residues: Ribosomal RNA large subunit methyltransferase H (153 aa).

Residues Leu70, Gly102, and Leu121 to Phe126 each bind S-adenosyl-L-methionine.

Belongs to the RNA methyltransferase RlmH family. Homodimer.

It localises to the cytoplasm. The enzyme catalyses pseudouridine(1915) in 23S rRNA + S-adenosyl-L-methionine = N(3)-methylpseudouridine(1915) in 23S rRNA + S-adenosyl-L-homocysteine + H(+). In terms of biological role, specifically methylates the pseudouridine at position 1915 (m3Psi1915) in 23S rRNA. The polypeptide is Ribosomal RNA large subunit methyltransferase H (Trichlorobacter lovleyi (strain ATCC BAA-1151 / DSM 17278 / SZ) (Geobacter lovleyi)).